The sequence spans 439 residues: CBL-interacting protein kinase 14 (439 aa).

In terms of domain architecture, Protein kinase spans 12–267 (YELGRLLGKG…IQKIKESTWF (256 aa)). Residues 18–26 (LGKGTFGKV) and lysine 41 each bind ATP. The active-site Proton acceptor is the aspartate 135. The tract at residues 153–182 (DFGLSALSESKRQDGLLHTTCGTPAYVAPE) is activation loop. One can recognise an NAF domain in the interval 298-333 (RKKNAHEDVKPMSVTNLNAFEIISFSKGFDLSGMFI). Positions 338–367 (RNEARFTSDKSASTIISKLEDVAKALNLRV) are PPI.

This sequence belongs to the protein kinase superfamily. CAMK Ser/Thr protein kinase family. SNF1 subfamily. Mn(2+) serves as cofactor.

It catalyses the reaction L-seryl-[protein] + ATP = O-phospho-L-seryl-[protein] + ADP + H(+). The catalysed reaction is L-threonyl-[protein] + ATP = O-phospho-L-threonyl-[protein] + ADP + H(+). Its function is as follows. CIPK serine-threonine protein kinases interact with CBL proteins. Binding of a CBL protein to the regulatory NAF domain of CIPK protein lead to the activation of the kinase in a calcium-dependent manner. The polypeptide is CBL-interacting protein kinase 14 (CIPK14) (Oryza sativa subsp. japonica (Rice)).